Here is a 209-residue protein sequence, read N- to C-terminus: Small ribosomal subunit protein uS4 (209 aa).

Residues 99-162 (RRLDNVVYRL…RESNKFQEMK (64 aa)) enclose the S4 RNA-binding domain.

The protein belongs to the universal ribosomal protein uS4 family. Part of the 30S ribosomal subunit. Contacts protein S5. The interaction surface between S4 and S5 is involved in control of translational fidelity.

Functionally, one of the primary rRNA binding proteins, it binds directly to 16S rRNA where it nucleates assembly of the body of the 30S subunit. In terms of biological role, with S5 and S12 plays an important role in translational accuracy. The sequence is that of Small ribosomal subunit protein uS4 from Syntrophomonas wolfei subsp. wolfei (strain DSM 2245B / Goettingen).